The primary structure comprises 78 residues: MKQIFIGIIRFYQKFISPMTPPTCRFYPTCSHYGLEAFQKHGALKGFWLTCKRILKCHPFHPGGFDPVPDKKDDKVHS.

Belongs to the UPF0161 family.

Its subcellular location is the cell membrane. Could be involved in insertion of integral membrane proteins into the membrane. This is Putative membrane protein insertion efficiency factor from Bacillus thuringiensis subsp. konkukian (strain 97-27).